The sequence spans 65 residues: Large ribosomal subunit protein bL32 (65 aa).

The segment covering 1–18 (MAVPKRRHSKSRTRKRRS) has biased composition (basic residues). Positions 1–20 (MAVPKRRHSKSRTRKRRSTY) are disordered.

Belongs to the bacterial ribosomal protein bL32 family.

In Salinibacter ruber (strain DSM 13855 / M31), this protein is Large ribosomal subunit protein bL32.